Consider the following 370-residue polypeptide: tRNA-specific 2-thiouridylase MnmA (370 aa).

Residues 12–19 (GMSGGVDS) and Leu38 each bind ATP. Residue Cys105 is the Nucleophile of the active site. Cys105 and Cys204 are oxidised to a cystine. Gly129 is a binding site for ATP. Positions 153–155 (KDQ) are interaction with tRNA. Residue Cys204 is the Cysteine persulfide intermediate of the active site. Residues 310 to 311 (RY) form an interaction with tRNA region.

This sequence belongs to the MnmA/TRMU family.

It localises to the cytoplasm. It carries out the reaction S-sulfanyl-L-cysteinyl-[protein] + uridine(34) in tRNA + AH2 + ATP = 2-thiouridine(34) in tRNA + L-cysteinyl-[protein] + A + AMP + diphosphate + H(+). Functionally, catalyzes the 2-thiolation of uridine at the wobble position (U34) of tRNA, leading to the formation of s(2)U34. The polypeptide is tRNA-specific 2-thiouridylase MnmA (Desulfitobacterium hafniense (strain Y51)).